The sequence spans 178 residues: Caveolin-1 (178 aa).

Ser-2 is subject to N-acetylserine. Position 2 is a phosphoserine (Ser-2). Positions 2 to 94 are required for homooligomerization; sequence SGGKYIDSEG…WKASFTTFTV (93 aa). Over 2–104 the chain is Cytoplasmic; the sequence is SGGKYIDSEG…TKYWFYRLLS (103 aa). The residue at position 5 (Lys-5) is an N6-acetyllysine; alternate. Lys-5 is covalently cross-linked (Glycyl lysine isopeptide (Lys-Gly) (interchain with G-Cter in ubiquitin); alternate). Tyr-6 is modified (phosphotyrosine). Ser-9 carries the post-translational modification Phosphoserine. Tyr-14 is subject to Phosphotyrosine; by ABL1. Tyr-25 is modified (phosphotyrosine). Residues Lys-26, Lys-30, Lys-39, Lys-47, and Lys-57 each participate in a glycyl lysine isopeptide (Lys-Gly) (interchain with G-Cter in ubiquitin) cross-link. Residues 82-94 form an interaction with CAVIN3 region; the sequence is DGIWKASFTTFTV. The helical intramembrane region spans 105 to 125; it reads ALFGIPMALIWGIYFAILSFL. Residues 126–178 lie on the Cytoplasmic side of the membrane; the sequence is HIWAVVPCIRSYLIEIQCISRIYSICIHTFCDPLFEAIGKIFSNVRIALQKEI. Residues 131–142 form an interacts with SPRY1, SPRY2, SPRY3 and SPRY4 region; that stretch reads VPCIRSYLIEIQ. 3 S-palmitoyl cysteine lipidation sites follow: Cys-133, Cys-143, and Cys-156. Residues 149-160 form an interacts with SPRY1, SPRY2, and SPRY4 region; the sequence is SICIHTFCDPLF. Positions 167-178 are interacts with SPRY1, SPRY2, SPRY3 and SPRY4; sequence FSNVRIALQKEI.

The protein belongs to the caveolin family. As to quaternary structure, homooligomer. Interacts with GLIPR2. Interacts with NOSTRIN. Interacts with SNAP25 and STX1A. Interacts (via the N-terminus) with DPP4; the interaction is direct. Interacts with CTNNB1, CDH1 and JUP. Interacts with PACSIN2; this interaction induces membrane tubulation. Interacts with SLC7A9. Interacts with BMX and BTK. Interacts with TGFBR1. Interacts with CAVIN3 (via leucine-zipper domain) in a cholesterol-sensitive manner. Interacts with CAVIN1. Interacts with EHD2 in a cholesterol-dependent manner. Forms a ternary complex with UBXN6 and VCP; mediates CAV1 targeting to lysosomes for degradation. Interacts with ABCG1; this interaction regulates ABCG1-mediated cholesterol efflux. Interacts with NEU3; this interaction enhances NEU3 sialidase activity within caveola. Interacts (via C-terminus) with SPRY1, SPRY2 (via C-terminus), SPRY3, and SPRY4. Interacts with IGFBP5; this interaction allows trafficking of IGFBP5 from the plasma membrane to the nucleus. Phosphorylated at Tyr-14 by ABL1 in response to oxidative stress. In terms of processing, ubiquitinated. Undergo monoubiquitination and multi- and/or polyubiquitination. Monoubiquitination of N-terminal lysines promotes integration in a ternary complex with UBXN6 and VCP which promotes oligomeric CAV1 targeting to lysosomes for degradation. Ubiquitinated by ZNRF1; leading to degradation and modulation of the TLR4-mediated immune response.

Its subcellular location is the golgi apparatus membrane. It is found in the cell membrane. The protein localises to the membrane. It localises to the caveola. The protein resides in the membrane raft. Functionally, may act as a scaffolding protein within caveolar membranes. Forms a stable heterooligomeric complex with CAV2 that targets to lipid rafts and drives caveolae formation. Mediates the recruitment of CAVIN proteins (CAVIN1/2/3/4) to the caveolae. Interacts directly with G-protein alpha subunits and can functionally regulate their activity. Involved in the costimulatory signal essential for T-cell receptor (TCR)-mediated T-cell activation. Its binding to DPP4 induces T-cell proliferation and NF-kappa-B activation in a T-cell receptor/CD3-dependent manner. Recruits CTNNB1 to caveolar membranes and may regulate CTNNB1-mediated signaling through the Wnt pathway. Negatively regulates TGFB1-mediated activation of SMAD2/3 by mediating the internalization of TGFBR1 from membrane rafts leading to its subsequent degradation. Binds 20(S)-hydroxycholesterol (20(S)-OHC). This Didelphis virginiana (North American opossum) protein is Caveolin-1 (CAV1).